A 118-amino-acid chain; its full sequence is Holo-[acyl-carrier-protein] synthase (118 aa).

Residues Asp8 and Glu58 each coordinate Mg(2+).

It belongs to the P-Pant transferase superfamily. AcpS family. The cofactor is Mg(2+).

Its subcellular location is the cytoplasm. It catalyses the reaction apo-[ACP] + CoA = holo-[ACP] + adenosine 3',5'-bisphosphate + H(+). Its function is as follows. Transfers the 4'-phosphopantetheine moiety from coenzyme A to a Ser of acyl-carrier-protein. This is Holo-[acyl-carrier-protein] synthase from Streptococcus pyogenes serotype M12 (strain MGAS2096).